The primary structure comprises 298 residues: Protease HtpX homolog (298 aa).

Helical transmembrane passes span 14–34 (VVLLVVFFALLALIGASAGYL) and 39–59 (YAMGLVLALVIGMIYATSMIF). A Zn(2+)-binding site is contributed by His-143. Glu-144 is a catalytic residue. His-147 lines the Zn(2+) pocket. Transmembrane regions (helical) follow at residues 158–178 (IAVALASAVTVISSIGGRMLW) and 197–217 (IITLLLSLLSLLLAPLVASLI). Glu-226 serves as a coordination point for Zn(2+).

This sequence belongs to the peptidase M48B family. The cofactor is Zn(2+).

Its subcellular location is the cell membrane. The polypeptide is Protease HtpX homolog (Streptococcus pyogenes serotype M49 (strain NZ131)).